Reading from the N-terminus, the 100-residue chain is uncharacterized protein (100 aa).

The segment covering 65 to 91 has biased composition (basic and acidic residues); the sequence is DDRERHLSATGERRREQGFGTSRRKDP. The disordered stretch occupies residues 65 to 100; sequence DDRERHLSATGERRREQGFGTSRRKDPSLYNWSDVK.

The protein belongs to the chlamydial CPn_0121/CT_031/TC_0300 family.

This is an uncharacterized protein from Chlamydia trachomatis serovar D (strain ATCC VR-885 / DSM 19411 / UW-3/Cx).